Here is a 1034-residue protein sequence, read N- to C-terminus: MINSHHTSQQTLNKESKSQMDKSYNIDDSIVDAKFENYTKKYQDDKLNKILHTYIKNPQILMDEEKEIKERFLAKQMKDVAATKQKFDTKNKLQQLELENENSQNNSYKTSNNLSKEEVIAVLQKQNRKSQVNSVLADNSNIQNDFYPQYRKPKNPTTKKRQSTDYTKRNTFQLENLNIQQQLNNKDSLNQQNQQQQDLAKNRVDNSQNQDIQARLYERTELQKLRIKQKEEEQAALKNKRQTNRSQSIEQNVNFVQNDNQKLIDRHKEYLKQLKQQVTIEKETQKQLKKKDEENKIRLRNSVLASIKNDLTEQRKLIQENHNLFLSKSTVSQSAKQISLPEINQSLTICLEKQKSEVEQEKKAVLTSQAFFRQSSLREIEETNEKIESKTNLSKVKKLRPLPFISSMVEWKKKQRIPADSKIFIVMGGYKDFKKALLKRGWIENPQTNSPCFDLKWTLLGKDIDYDNILPNQIVNHFENNSKICSKIGLLNSLKNLYWFDNADLNCFFPQCFDMNDPDEFNDFVKNFKLSKAVSVLKKYLRLYLEKDEKYNNCKIQAQVALQVLTRYYNDINNVIDDEKQASEYFKSIPDDEWEILASDEMSNEDLAKKKHFEWIKKIKLAYQGIKVKAQVKKKKKKSLAMIKKMISNEAIKRKQDGEKQQIDSSDSEDEEVEMDDFTSAVNQFLNQREKCDPQFNLKGEDNIWIVKPAGLSRGRGITCYKNLVEIIDHAKSMELQMIVQKYIENPVLIKQRKFDIRIWVLVTDWNPLAIWYFDECYVRFSADSYSTKNLSNKFQHLTNNAISKKKAQQGQDEITLQGNMYTQEQLENFFIETEGYNVFQQKIKPQIINIIKWSILSCSDTVESRKNSMELFGYDIMIDTNFNPWLLEVNTSPSLEYSTEITKKLVKQVLEDVAKVVVDYGMAQKSGIKKSELQKIGTGKFIKIYQGLEIQDKGINSIQKNFICEGSKMKIRKPKKQKKNTKLDKKQNLQQDLTINNQINHDQKQFSSQQANNIETYSRPQTAKSQTQSSKKL.

Composition is skewed to polar residues over residues 1–13 and 131–146; these read MINS…QTLN and QVNS…QNDF. Disordered stretches follow at residues 1–21, 131–166, and 189–208; these read MINS…SQMD, QVNS…STDY, and LNQQ…DNSQ. Basic residues predominate over residues 151–161; the sequence is RKPKNPTTKKR. Positions 189 to 199 are enriched in low complexity; that stretch reads LNQQNQQQQDL. The TTL domain occupies 571–930; sequence DINNVIDDEK…YGMAQKSGIK (360 aa). ATP contacts are provided by residues 741-744, K754, and D756; that span reads QKYI. A disordered region spans residues 1002–1034; it reads HDQKQFSSQQANNIETYSRPQTAKSQTQSSKKL.

It localises to the cytoplasm. Probable glycylase which modifies tubulin, generating side chains of glycine on the gamma-carboxyl groups of specific glutamate residues within the C-terminal tail of tubulin. The sequence is that of Tubulin glycylase 3D (TTLL3D) from Tetrahymena thermophila (strain SB210).